We begin with the raw amino-acid sequence, 507 residues long: Hippocampus abundant transcript-like protein 1 (507 aa).

The interval 1-27 is disordered; that stretch reads MSTDGESPEEPRWKAVASPKASTMPEK. Topologically, residues 1–51 are extracellular; that stretch reads MSTDGESPEEPRWKAVASPKASTMPEKRGSAQAASGSWLQGFGHPSVYHAA. The chain crosses the membrane as a helical span at residues 52–72; sequence FVIFLEFFAWGLLTTPMLTVL. Residues 73–84 are Cytoplasmic-facing; that stretch reads HETFPQHTFLMN. The chain crosses the membrane as a helical span at residues 85-105; the sequence is GLIQGVKGLLSFLSAPLIGAL. Residues 106–113 are Extracellular-facing; the sequence is SDVWGRKP. A helical membrane pass occupies residues 114 to 134; that stretch reads FLLGTVFFTCFPIPLMRINPW. Residues 135–136 lie on the Cytoplasmic side of the membrane; the sequence is WY. The chain crosses the membrane as a helical span at residues 137–157; sequence FGMISVSGVFSVTFSVIFAYV. Residues 158–170 lie on the Extracellular side of the membrane; sequence ADFTQEHERSTAY. The helical transmembrane segment at 171 to 191 threads the bilayer; that stretch reads GWVSATFAASLVSSPAIGTYL. Residues 192 to 198 lie on the Cytoplasmic side of the membrane; that stretch reads SANYGDS. Residues 199 to 219 traverse the membrane as a helical segment; the sequence is LVVLVATLVALLDICFILIAV. At 220–257 the chain is on the extracellular side; it reads PESLSEKIRPASWGAQISWKQADPFASLKKVGKDSTVL. The helical transmembrane segment at 258-278 threads the bilayer; the sequence is LICITVFLSYLPEAGQYSSFF. The Cytoplasmic segment spans residues 279 to 283; the sequence is LYLRQ. Residues 284 to 304 form a helical membrane-spanning segment; that stretch reads VIGFGSVKIVAFIAMVGILSI. Over 305–323 the chain is Extracellular; the sequence is VAQTVFLSKLMRSLGNKNT. Residues 324 to 344 traverse the membrane as a helical segment; that stretch reads VLLGLGFQMLQLAWYGFGSQA. The Cytoplasmic segment spans residues 345–347; that stretch reads WMM. A helical transmembrane segment spans residues 348–368; that stretch reads WAAGTVAAMSSITFPAVSALI. The Extracellular portion of the chain corresponds to 369–389; that stretch reads SRNAESDQQGVAQGIVTGIRG. The helical transmembrane segment at 390–410 threads the bilayer; the sequence is LCNGLGPALYGFIFYMFHVEL. Over 411–430 the chain is Cytoplasmic; sequence SELGPKLNSDDDPLQGAFIP. Residues 431 to 451 traverse the membrane as a helical segment; that stretch reads GPPFLFGACIVLMSFLVALFI. The Extracellular portion of the chain corresponds to 452–507; that stretch reads PEYRKTSGVQKHNNSTSGSLSTPPERGSDEDIEPLLQDSSIWELSFEEPGNQCTEL. Over residues 459-473 the composition is skewed to polar residues; that stretch reads GVQKHNNSTSGSLST. The tract at residues 459–483 is disordered; it reads GVQKHNNSTSGSLSTPPERGSDEDI. Residues Asn464 and Asn465 are each glycosylated (N-linked (GlcNAc...) asparagine).

It belongs to the major facilitator superfamily.

It localises to the membrane. The polypeptide is Hippocampus abundant transcript-like protein 1 (Mus musculus (Mouse)).